Here is a 303-residue protein sequence, read N- to C-terminus: Caspase-7 (303 aa).

A disordered region spans residues 1-27 (MADDQNCAPELEKADPSGEDGVDAKPD). Alanine 2 is modified (N-acetylalanine). The propeptide at 2–23 (ADDQNCAPELEKADPSGEDGVD) is N-terminally processed. Positions 10 to 27 (ELEKADPSGEDGVDAKPD) are enriched in basic and acidic residues. At serine 30 the chain carries Phosphoserine. The exosite stretch occupies residues 38–41 (KKKK). The interval 76 to 87 (KNFDKVTGMDVR) is loop L1. Residue histidine 144 is part of the active site. Residue threonine 173 is modified to Phosphothreonine. Cysteine 186 is an active-site residue. The loop L2 stretch occupies residues 187–196 (RGTELDDGVQ). Residues 199 to 206 (SGPINETD) constitute a propeptide that is removed on maturation. The interval 226–238 (VPGYYSWRNPGKG) is loop L3. A Phosphoserine modification is found at serine 239. The loop L4 stretch occupies residues 274–288 (ESQCDDPCFNEKKQI).

It belongs to the peptidase C14A family. As to quaternary structure, heterotetramer that consists of two anti-parallel arranged heterodimers, each one formed by a 20 kDa (p20) and a 11 kDa (p11) subunit. Interacts with XIAP (via its second BIR domain); inhibiting CASP7 activity. Interacts with BIRC6/bruce. Interacts with ATXN3 (short isoform 1). Interacts with HSPA5. Post-translationally, cleavage by different proteases, such as granzyme B (GZMB), caspase-1 (CASP1), caspase-8 (CASP8) or caspase-9 (CASP9) generate the two active subunits. Its involvement in different programmed cell death processes is probably specified by the protease that activates CASP7. Cleaved and activated by initiator caspases (CASP8 and/or CASP9), leading to execution phase of apoptosis. Cleavage and maturation by GZMB regulates granzyme-mediated programmed cell death. Cleaved and activated by CASP1 in response to bacterial infection. Propeptide domains can also be cleaved efficiently by CASP3. Active heterodimers between the small subunit of caspase-7 and the large subunit of CASP3, and vice versa, also occur. Also cleaved at the N-terminus at alternative sites by CAPN1, leading to its activation. Phosphorylation at Ser-30 and Ser-239 by PAK2 inhibits its activity. Phosphorylation at Ser-30 prevents cleavage and activation by initiator caspase CASP9, while phosphorylation at Ser-239 prevents thiol protease activity by preventing substrate-binding. In terms of processing, ubiquitinated by BIRC6; this activity is inhibited by DIABLO/SMAC.

It localises to the cytoplasm. The protein resides in the cytosol. It is found in the nucleus. Its subcellular location is the secreted. The protein localises to the extracellular space. The enzyme catalyses Strict requirement for an Asp residue at position P1 and has a preferred cleavage sequence of Asp-Glu-Val-Asp-|-.. Its activity is regulated as follows. During activation, the N-terminal disordered prodomain is removed by cleavage. Concomitantly, double cleavage gives rise to a large Caspase-7 subunit p20 and a small Caspase-7 subunit p11. The two large and two small subunits then assemble to form the active CASP7 complex. Can be cleaved and activated by different caspases, depending on the context. Cleaved and activated by initiator caspases (CASP8 and/or CASP9), leading to execution phase of apoptosis. Cleavage and maturation by GZMB regulates granzyme-mediated programmed cell death. Cleavage and maturation by CASP1 regulates pyroptosis. Inhibited by XIAP, which directly binds to the active site pocket and obstructs substrate entry. Phosphorylation at Ser-30 and Ser-239 by PAK2 inhibits its activity. Inhibited by BIRC6; following inhibition of BIRC6-caspase binding by DIABLO/SMAC, BIRC6 is subjected to caspase cleavage, leading to an increase in active caspases. Thiol protease involved in different programmed cell death processes, such as apoptosis, pyroptosis or granzyme-mediated programmed cell death, by proteolytically cleaving target proteins. Has a marked preference for Asp-Glu-Val-Asp (DEVD) consensus sequences, with some plasticity for alternate non-canonical sequences. Its involvement in the different programmed cell death processes is probably determined by upstream proteases that activate CASP7. Acts as an effector caspase involved in the execution phase of apoptosis: following cleavage and activation by initiator caspases (CASP8 and/or CASP9), mediates execution of apoptosis by catalyzing cleavage of proteins, such as CLSPN, PARP1, PTGES3 and YY1. Compared to CASP3, acts as a minor executioner caspase and cleaves a limited set of target proteins. Acts as a key regulator of the inflammatory response in response to bacterial infection by catalyzing cleavage and activation of the sphingomyelin phosphodiesterase SMPD1 in the extracellular milieu, thereby promoting membrane repair. Regulates pyroptosis in intestinal epithelial cells: cleaved and activated by CASP1 in response to S.typhimurium infection, promoting its secretion to the extracellular milieu, where it catalyzes activation of SMPD1, generating ceramides that repair membranes and counteract the action of gasdermin-D (GSDMD) pores. Regulates granzyme-mediated programmed cell death in hepatocytes: cleaved and activated by granzyme B (GZMB) in response to bacterial infection, promoting its secretion to the extracellular milieu, where it catalyzes activation of SMPD1, generating ceramides that repair membranes and counteract the action of perforin (PRF1) pores. Following cleavage by CASP1 in response to inflammasome activation, catalyzes processing and inactivation of PARP1, alleviating the transcription repressor activity of PARP1. Acts as an inhibitor of type I interferon production during virus-induced apoptosis by mediating cleavage of antiviral proteins CGAS, IRF3 and MAVS, thereby preventing cytokine overproduction. Cleaves and activates sterol regulatory element binding proteins (SREBPs). Cleaves phospholipid scramblase proteins XKR4, XKR8 and XKR9. Cleaves BIRC6 following inhibition of BIRC6-caspase binding by DIABLO/SMAC. The protein is Caspase-7 (CASP7) of Mesocricetus auratus (Golden hamster).